Here is a 246-residue protein sequence, read N- to C-terminus: Cold-regulated protein 27 (246 aa).

Disordered regions lie at residues 1–39 (MVGDYRGRFSSRRFSDDSDDSSDDASSVEGETTSSMYSA) and 151–232 (EPEN…VVPL). A compositionally biased stretch (low complexity) spans 168–180 (SSGSASSLKQLSS).

The protein resides in the nucleus. In terms of biological role, together with COR28, involved in central circadian clock regulation and in flowering promotion, by binding to the chromatin of clock-associated evening genes TOC1, PRR5, ELF4 and cold-responsive genes in order to repress their transcription. Negative regulator of freezing tolerance. This is Cold-regulated protein 27 from Arabidopsis thaliana (Mouse-ear cress).